We begin with the raw amino-acid sequence, 189 residues long: Elongation factor P (189 aa).

This sequence belongs to the elongation factor P family.

The protein resides in the cytoplasm. It functions in the pathway protein biosynthesis; polypeptide chain elongation. Involved in peptide bond synthesis. Stimulates efficient translation and peptide-bond synthesis on native or reconstituted 70S ribosomes in vitro. Probably functions indirectly by altering the affinity of the ribosome for aminoacyl-tRNA, thus increasing their reactivity as acceptors for peptidyl transferase. This is Elongation factor P from Pseudomonas putida (strain ATCC 700007 / DSM 6899 / JCM 31910 / BCRC 17059 / LMG 24140 / F1).